The sequence spans 537 residues: Prolyl 4-hydroxylase subunit alpha-2 (537 aa).

The N-terminal stretch at 1-23 is a signal peptide; it reads MKLQVLVLVLLMSWFGVLSWVQA. Asn-117 carries N-linked (GlcNAc...) asparagine glycosylation. The TPR repeat unit spans residues 209-242; the sequence is SLVLDYLSYAVFQLGDLHRAVELTRRLLSLDPSH. An N-linked (GlcNAc...) asparagine glycan is attached at Asn-266. A Fe2OG dioxygenase domain is found at 414-522; sequence TAELLQVANY…KWVSNKWFHE (109 aa). Fe cation-binding residues include His-432 and Asp-434. Residue Lys-482 is modified to N6-succinyllysine. His-503 contacts Fe cation. 2-oxoglutarate is bound at residue Lys-513.

The protein belongs to the P4HA family. In terms of assembly, heterotetramer of two alpha-2 chains and two beta chains (P4HB) (the beta chain is the multi-functional PDI), where P4HB plays the role of a structural subunit; this tetramer catalyzes the formation of 4-hydroxyproline in collagen. Fe(2+) is required as a cofactor. The cofactor is L-ascorbate. In terms of tissue distribution, expressed at least in brain, heart and lung.

The protein localises to the endoplasmic reticulum lumen. It catalyses the reaction L-prolyl-[collagen] + 2-oxoglutarate + O2 = trans-4-hydroxy-L-prolyl-[collagen] + succinate + CO2. With respect to regulation, inhibited by poly(L-proline) only at very high concentrations. Its function is as follows. Catalyzes the post-translational formation of 4-hydroxyproline in -Xaa-Pro-Gly- sequences in collagens and other proteins. The chain is Prolyl 4-hydroxylase subunit alpha-2 (P4ha2) from Mus musculus (Mouse).